The sequence spans 21 residues: Thanatin (21 aa).

A disulfide bond links cysteine 11 and cysteine 18.

It is found in the secreted. Insect defense peptide with a broad spectrum of activity against Gram-positive and Gram-negative bacteria and fungi. No activity against S.aureus. Stops respiration in bacteria but does not permeabilize their inner membranes. This Podisus maculiventris (Spined soldier bug) protein is Thanatin.